A 530-amino-acid polypeptide reads, in one-letter code: Berberine bridge enzyme-like 4 (530 aa).

The signal sequence occupies residues M1 to A19. An intrachain disulfide couples C32 to C95. N52 is a glycosylation site (N-linked (GlcNAc...) asparagine). Residues N73–V247 enclose the FAD-binding PCMH-type domain. Positions H110 to C172 form a cross-link, 6-(S-cysteinyl)-8alpha-(pros-histidyl)-FAD (His-Cys). N-linked (GlcNAc...) asparagine glycans are attached at residues N257, N292, N341, and N441.

The protein belongs to the oxygen-dependent FAD-linked oxidoreductase family. It depends on FAD as a cofactor. In terms of processing, the FAD cofactor is bound via a bicovalent 6-S-cysteinyl, 8alpha-N1-histidyl FAD linkage.

The protein resides in the secreted. It localises to the cell wall. Probable flavin-dependent oxidoreductase. The sequence is that of Berberine bridge enzyme-like 4 from Arabidopsis thaliana (Mouse-ear cress).